Here is a 417-residue protein sequence, read N- to C-terminus: UDP-N-acetylmuramoylalanine--D-glutamate ligase (417 aa).

Position 101-107 (101-107) interacts with ATP; it reads GTAGKTS.

The protein belongs to the MurCDEF family.

The protein localises to the cytoplasm. It catalyses the reaction UDP-N-acetyl-alpha-D-muramoyl-L-alanine + D-glutamate + ATP = UDP-N-acetyl-alpha-D-muramoyl-L-alanyl-D-glutamate + ADP + phosphate + H(+). It functions in the pathway cell wall biogenesis; peptidoglycan biosynthesis. Functionally, cell wall formation. Catalyzes the addition of glutamate to the nucleotide precursor UDP-N-acetylmuramoyl-L-alanine (UMA). This Thermus thermophilus (strain ATCC BAA-163 / DSM 7039 / HB27) protein is UDP-N-acetylmuramoylalanine--D-glutamate ligase.